A 154-amino-acid chain; its full sequence is 6,7-dimethyl-8-ribityllumazine synthase (154 aa).

5-amino-6-(D-ribitylamino)uracil is bound by residues phenylalanine 22, 56 to 58, and 80 to 82; these read AFE and AVI. 85–86 is a (2S)-2-hydroxy-3-oxobutyl phosphate binding site; sequence ET. The Proton donor role is filled by histidine 88. 5-amino-6-(D-ribitylamino)uracil is bound at residue phenylalanine 113. Arginine 127 is a (2S)-2-hydroxy-3-oxobutyl phosphate binding site.

It belongs to the DMRL synthase family.

The enzyme catalyses (2S)-2-hydroxy-3-oxobutyl phosphate + 5-amino-6-(D-ribitylamino)uracil = 6,7-dimethyl-8-(1-D-ribityl)lumazine + phosphate + 2 H2O + H(+). Its pathway is cofactor biosynthesis; riboflavin biosynthesis; riboflavin from 2-hydroxy-3-oxobutyl phosphate and 5-amino-6-(D-ribitylamino)uracil: step 1/2. Catalyzes the formation of 6,7-dimethyl-8-ribityllumazine by condensation of 5-amino-6-(D-ribitylamino)uracil with 3,4-dihydroxy-2-butanone 4-phosphate. This is the penultimate step in the biosynthesis of riboflavin. The chain is 6,7-dimethyl-8-ribityllumazine synthase from Thermoanaerobacter sp. (strain X514).